Consider the following 148-residue polypeptide: C-C motif chemokine 2 (148 aa).

The signal sequence occupies residues 1–23 (MQVPVMLLGLLFTVAGWSIHVLA). At Gln-24 the chain carries Pyrrolidone carboxylic acid. 2 disulfide bridges follow: Cys-34–Cys-59 and Cys-35–Cys-75. N-linked (GlcNAc...) asparagine glycosylation occurs at Asn-126.

Belongs to the intercrine beta (chemokine CC) family. In terms of assembly, monomer or homodimer; in equilibrium. Is tethered on endothelial cells by glycosaminoglycan (GAG) side chains of proteoglycans. Interacts with TNFAIP6 (via Link domain). Processing at the N-terminus can regulate receptor and target cell selectivity. Deletion of the N-terminal residue converts it from an activator of basophil to an eosinophil chemoattractant. In terms of processing, N-Glycosylated.

It is found in the secreted. Acts as a ligand for C-C chemokine receptor CCR2. Signals through binding and activation of CCR2 and induces a strong chemotactic response and mobilization of intracellular calcium ions. Exhibits a chemotactic activity for monocytes and basophils but not neutrophils or eosinophils. Plays an important role in mediating peripheral nerve injury-induced neuropathic pain. Increases NMDA-mediated synaptic transmission in both dopamine D1 and D2 receptor-containing neurons, which may be caused by MAPK/ERK-dependent phosphorylation of GRIN2B/NMDAR2B. This is C-C motif chemokine 2 (Ccl2) from Mus musculus (Mouse).